A 775-amino-acid chain; its full sequence is Kojibiose phosphorylase (775 aa).

361–362 serves as a coordination point for substrate; the sequence is WD. Residue Glu501 is the Proton donor of the active site. 614-615 lines the substrate pocket; that stretch reads KQ.

The protein belongs to the glycosyl hydrolase 65 family. As to quaternary structure, homohexamer.

It carries out the reaction kojibiose + phosphate = beta-D-glucose 1-phosphate + D-glucose. Its activity is regulated as follows. Inhibited by Hg(2+) and Pb(2+). Catalyzes the reversible phosphorolysis of kojibiose into beta-D-glucose 1-phosphate (Glc1P) and D-glucose. Can act with alpha-1,2-oligoglucans, such as selaginose, but more slowly. Inactive when disaccharides with linkages other than alpha-1,2 linkages, such as sophorose, trehalose, neotrehalose, nigerose, laminaribiose, maltose, cellobiose, isomaltose, gentiobiose, sucrose and lactose, are used as substrates. In contrast, shows broad specificity for the reverse reaction. Various monosaccharides and disaccharides having a glucosyl residue at the non-reducing end are effective acceptors. This is Kojibiose phosphorylase from Thermoanaerobacter brockii (Thermoanaerobium brockii).